The primary structure comprises 553 residues: Glycerol kinase 2 (553 aa).

Thr20 provides a ligand contact to substrate. Arg24 lines the ATP pocket. Residues Arg94, Tyr148, and Asp259 each coordinate substrate. ATP-binding positions include Thr281, Gly326, and 427-431; that span reads GMTNN. The helical transmembrane segment at 526 to 546 threads the bilayer; it reads IFSSLPLGFFIVSSMVMLIGA.

This sequence belongs to the FGGY kinase family. In terms of assembly, interacts with ARMC12. Interacts with PLD6. In terms of tissue distribution, testis-specific. Expressed in the midpiece of spermatozoa.

Its subcellular location is the mitochondrion outer membrane. The protein resides in the cytoplasm. The catalysed reaction is glycerol + ATP = sn-glycerol 3-phosphate + ADP + H(+). It functions in the pathway polyol metabolism; glycerol degradation via glycerol kinase pathway; sn-glycerol 3-phosphate from glycerol: step 1/1. Its function is as follows. Key enzyme in the regulation of glycerol uptake and metabolism. Essential for male fertility and sperm mitochondrial sheath formation. Required for proper arrangement of crescent-like mitochondria to form the mitochondrial sheath during spermatogenesis. Can induce mitochondrial clustering through interactions with PLD6 and up-regulation of phosphatidic acid synthesis in the mitochondria. This chain is Glycerol kinase 2 (GK2), found in Homo sapiens (Human).